We begin with the raw amino-acid sequence, 438 residues long: UDP-N-acetylmuramoylalanine--D-glutamate ligase (438 aa).

Residue Gly112–Thr118 coordinates ATP.

The protein belongs to the MurCDEF family.

The protein localises to the cytoplasm. The catalysed reaction is UDP-N-acetyl-alpha-D-muramoyl-L-alanine + D-glutamate + ATP = UDP-N-acetyl-alpha-D-muramoyl-L-alanyl-D-glutamate + ADP + phosphate + H(+). Its pathway is cell wall biogenesis; peptidoglycan biosynthesis. In terms of biological role, cell wall formation. Catalyzes the addition of glutamate to the nucleotide precursor UDP-N-acetylmuramoyl-L-alanine (UMA). This is UDP-N-acetylmuramoylalanine--D-glutamate ligase from Shigella sonnei (strain Ss046).